Consider the following 251-residue polypeptide: 5'-nucleotidase SurE (251 aa).

4 residues coordinate a divalent metal cation: Asp-8, Asp-9, Ser-39, and Asn-91.

The protein belongs to the SurE nucleotidase family. A divalent metal cation is required as a cofactor.

It is found in the cytoplasm. The catalysed reaction is a ribonucleoside 5'-phosphate + H2O = a ribonucleoside + phosphate. In terms of biological role, nucleotidase that shows phosphatase activity on nucleoside 5'-monophosphates. The chain is 5'-nucleotidase SurE from Nitrosococcus oceani (strain ATCC 19707 / BCRC 17464 / JCM 30415 / NCIMB 11848 / C-107).